A 280-amino-acid polypeptide reads, in one-letter code: Undecaprenyl-diphosphatase (280 aa).

8 helical membrane-spanning segments follow: residues 1–21 (MEWIQAAILGIVQGLTEFLPI), 40–60 (GAAFTAVSQLGTEAAVIVFFW), 89–109 (WLVVAGSIPIIVVGLFFQNAI), 116–136 (LWIVATTLIVFGVILAVADAV), 146–166 (LTVKHGILYGLAQCLALIPGV), 191–211 (FLLAIPAVLGSGFYELFKIVA), 227–247 (LATVIAFVVGYLIIGWFLKFI), and 260–280 (IALGLVVFVLLGFGVIPATLS).

This sequence belongs to the UppP family.

Its subcellular location is the cell membrane. The enzyme catalyses di-trans,octa-cis-undecaprenyl diphosphate + H2O = di-trans,octa-cis-undecaprenyl phosphate + phosphate + H(+). Functionally, catalyzes the dephosphorylation of undecaprenyl diphosphate (UPP). Confers resistance to bacitracin. The sequence is that of Undecaprenyl-diphosphatase from Renibacterium salmoninarum (strain ATCC 33209 / DSM 20767 / JCM 11484 / NBRC 15589 / NCIMB 2235).